The primary structure comprises 213 residues: Glycerol-3-phosphate acyltransferase (213 aa).

Helical transmembrane passes span Ile2–Ile22, Ala52–Phe74, Pro81–Phe100, Val112–Leu132, Val143–Leu163, and Ser164–Arg184.

Belongs to the PlsY family. As to quaternary structure, probably interacts with PlsX.

The protein resides in the cell membrane. It catalyses the reaction an acyl phosphate + sn-glycerol 3-phosphate = a 1-acyl-sn-glycero-3-phosphate + phosphate. The protein operates within lipid metabolism; phospholipid metabolism. In terms of biological role, catalyzes the transfer of an acyl group from acyl-phosphate (acyl-PO(4)) to glycerol-3-phosphate (G3P) to form lysophosphatidic acid (LPA). This enzyme utilizes acyl-phosphate as fatty acyl donor, but not acyl-CoA or acyl-ACP. The chain is Glycerol-3-phosphate acyltransferase from Streptococcus pneumoniae (strain CGSP14).